The sequence spans 214 residues: Adenylate kinase (214 aa).

10–15 provides a ligand contact to ATP; that stretch reads GAGKGT. Positions 30–59 are NMP; that stretch reads STGDILRAAVKDMTPMGGKAKSFMDAGALV. Residues threonine 31, arginine 36, 57 to 59, 85 to 88, and glutamine 92 contribute to the AMP site; these read ALV and GFPR. The tract at residues 126-163 is LID; that stretch reads GRRTCRNCGKGFHVSFDPPKSSGICDECSGELYQRDDD. Position 127 (arginine 127) interacts with ATP. Zn(2+) contacts are provided by cysteine 130, cysteine 133, cysteine 150, and cysteine 153. AMP-binding residues include arginine 160 and arginine 171. Glycine 199 provides a ligand contact to ATP.

The protein belongs to the adenylate kinase family. Monomer.

Its subcellular location is the cytoplasm. The enzyme catalyses AMP + ATP = 2 ADP. The protein operates within purine metabolism; AMP biosynthesis via salvage pathway; AMP from ADP: step 1/1. Catalyzes the reversible transfer of the terminal phosphate group between ATP and AMP. Plays an important role in cellular energy homeostasis and in adenine nucleotide metabolism. In Geotalea daltonii (strain DSM 22248 / JCM 15807 / FRC-32) (Geobacter daltonii), this protein is Adenylate kinase.